The primary structure comprises 391 residues: Mannonate dehydratase (391 aa).

The interval 334 to 359 is disordered; the sequence is ERRRERDGGPRLPLRPDHGHHLLDDL.

This sequence belongs to the mannonate dehydratase family. It depends on Fe(2+) as a cofactor. Requires Mn(2+) as cofactor.

The enzyme catalyses D-mannonate = 2-dehydro-3-deoxy-D-gluconate + H2O. The protein operates within carbohydrate metabolism; pentose and glucuronate interconversion. In terms of biological role, catalyzes the dehydration of D-mannonate. The chain is Mannonate dehydratase from Chromohalobacter salexigens (strain ATCC BAA-138 / DSM 3043 / CIP 106854 / NCIMB 13768 / 1H11).